A 313-amino-acid chain; its full sequence is Ribosomal RNA small subunit methyltransferase H (313 aa).

S-adenosyl-L-methionine is bound by residues 35 to 37 (GGH), aspartate 55, phenylalanine 79, aspartate 101, and glutamine 108.

Belongs to the methyltransferase superfamily. RsmH family.

It is found in the cytoplasm. It carries out the reaction cytidine(1402) in 16S rRNA + S-adenosyl-L-methionine = N(4)-methylcytidine(1402) in 16S rRNA + S-adenosyl-L-homocysteine + H(+). Its function is as follows. Specifically methylates the N4 position of cytidine in position 1402 (C1402) of 16S rRNA. This chain is Ribosomal RNA small subunit methyltransferase H, found in Musicola paradisiaca (strain Ech703) (Dickeya paradisiaca).